Reading from the N-terminus, the 444-residue chain is Pentatricopeptide repeat-containing protein At4g35850, mitochondrial (444 aa).

The N-terminal 25 residues, 1–25, are a transit peptide targeting the mitochondrion; it reads MKFLMQSISGRNRSLVRALVSRRYF. 6 PPR repeats span residues 40–74, 75–109, 110–144, 145–179, 255–289, and 290–325; these read DLSE…GVQP, TADI…GIAP, DVNL…DVKP, NGQT…GVGL, NLTV…GKDT, and DTYC…KIPA.

It belongs to the PPR family. P subfamily.

It is found in the mitochondrion. This chain is Pentatricopeptide repeat-containing protein At4g35850, mitochondrial, found in Arabidopsis thaliana (Mouse-ear cress).